The chain runs to 651 residues: Far upstream element-binding protein 1 (651 aa).

Disordered regions lie at residues 1–24 and 40–92; these read MADY…GVVN and KIGG…HQQQ. Residue Ala2 is modified to N-acetylalanine. A phosphoserine mark is found at Ser48 and Ser51. Basic and acidic residues predominate over residues 61–73; the sequence is RPLEDGDQPDAKK. KH domains are found at residues 96–160, 181–247, and 271–335; these read VMTE…KRLL, NAVQ…KEMV, and NEGI…AEII. Position 136 is a phosphoserine (Ser136). Thr149 bears the Phosphothreonine mark. Omega-N-methylarginine is present on residues Arg317, Arg355, Arg357, and Arg359. The 68-residue stretch at 372–439 folds into the KH 4 domain; that stretch reads LQEFNFIVPT…QQIDYARQLI (68 aa). Position 411 is a phosphoserine (Ser411). A Phosphothreonine modification is found at Thr428. Disordered stretches follow at residues 443 to 528, 545 to 574, and 625 to 651; these read IGGP…GADP, AQPP…APAG, and TSPQ…HHLY. Pro residues predominate over residues 464–501; the sequence is PHGPPGPPGPGTPMGPYNPAPYNPGPPGPAPHGPPAPY. 2 stretches are compositionally biased toward low complexity: residues 514 to 528 and 552 to 574; these read QQQA…GADP and PAGA…APAG. A Phosphoserine modification is found at Ser626.

As to quaternary structure, found in a complex with PUF60 and far upstream element (FUSE) DNA segment. Interacts with PUF60 and JTV1. Ubiquitinated. This targets the protein for proteasome-mediated degradation.

The protein localises to the nucleus. Functionally, regulates MYC expression by binding to a single-stranded far-upstream element (FUSE) upstream of the MYC promoter. May act both as activator and repressor of transcription. In Mus musculus (Mouse), this protein is Far upstream element-binding protein 1 (Fubp1).